Consider the following 517-residue polypeptide: Glycerol kinase (517 aa).

Thr24 is an ADP binding site. ATP is bound by residues Thr24, Thr25, and Ser26. Thr24 contributes to the sn-glycerol 3-phosphate binding site. An ADP-binding site is contributed by Arg28. Residues Arg94, Glu95, Tyr146, and Asp261 each contribute to the sn-glycerol 3-phosphate site. 5 residues coordinate glycerol: Arg94, Glu95, Tyr146, Asp261, and Gln262. 2 residues coordinate ADP: Thr283 and Gly327. ATP is bound by residues Thr283, Gly327, Gln331, and Gly428. ADP is bound by residues Gly428 and Asn432.

The protein belongs to the FGGY kinase family.

It catalyses the reaction glycerol + ATP = sn-glycerol 3-phosphate + ADP + H(+). It participates in polyol metabolism; glycerol degradation via glycerol kinase pathway; sn-glycerol 3-phosphate from glycerol: step 1/1. With respect to regulation, inhibited by fructose 1,6-bisphosphate (FBP). Its function is as follows. Key enzyme in the regulation of glycerol uptake and metabolism. Catalyzes the phosphorylation of glycerol to yield sn-glycerol 3-phosphate. The sequence is that of Glycerol kinase from Mycobacterium tuberculosis (strain ATCC 25177 / H37Ra).